Reading from the N-terminus, the 311-residue chain is Ribose-phosphate pyrophosphokinase (311 aa).

ATP-binding positions include 37–39 (DGE) and 96–97 (RQ). Residues His130 and Asp170 each coordinate Mg(2+). Lys193 is a catalytic residue. D-ribose 5-phosphate-binding positions include Arg195, Asp219, and 223-227 (DTAGT).

Belongs to the ribose-phosphate pyrophosphokinase family. Class I subfamily. As to quaternary structure, homohexamer. The cofactor is Mg(2+).

Its subcellular location is the cytoplasm. The catalysed reaction is D-ribose 5-phosphate + ATP = 5-phospho-alpha-D-ribose 1-diphosphate + AMP + H(+). The protein operates within metabolic intermediate biosynthesis; 5-phospho-alpha-D-ribose 1-diphosphate biosynthesis; 5-phospho-alpha-D-ribose 1-diphosphate from D-ribose 5-phosphate (route I): step 1/1. Functionally, involved in the biosynthesis of the central metabolite phospho-alpha-D-ribosyl-1-pyrophosphate (PRPP) via the transfer of pyrophosphoryl group from ATP to 1-hydroxyl of ribose-5-phosphate (Rib-5-P). This chain is Ribose-phosphate pyrophosphokinase, found in Aquifex aeolicus (strain VF5).